A 241-amino-acid chain; its full sequence is Purine nucleoside phosphorylase DeoD-type 1 (241 aa).

Position 5 (histidine 5) interacts with a purine D-ribonucleoside. Residues glycine 21, arginine 25, arginine 44, and 88 to 91 (RVGS) each bind phosphate. A purine D-ribonucleoside-binding positions include 180–182 (EME) and 204–205 (SD). Aspartate 205 functions as the Proton donor in the catalytic mechanism.

It belongs to the PNP/UDP phosphorylase family. In terms of assembly, homohexamer; trimer of homodimers.

The enzyme catalyses a purine D-ribonucleoside + phosphate = a purine nucleobase + alpha-D-ribose 1-phosphate. The catalysed reaction is a purine 2'-deoxy-D-ribonucleoside + phosphate = a purine nucleobase + 2-deoxy-alpha-D-ribose 1-phosphate. Catalyzes the reversible phosphorolytic breakdown of the N-glycosidic bond in the beta-(deoxy)ribonucleoside molecules, with the formation of the corresponding free purine bases and pentose-1-phosphate. In Photobacterium profundum (strain SS9), this protein is Purine nucleoside phosphorylase DeoD-type 1.